The following is a 211-amino-acid chain: ATP phosphoribosyltransferase (211 aa).

This sequence belongs to the ATP phosphoribosyltransferase family. Short subfamily. In terms of assembly, heteromultimer composed of HisG and HisZ subunits.

It localises to the cytoplasm. The catalysed reaction is 1-(5-phospho-beta-D-ribosyl)-ATP + diphosphate = 5-phospho-alpha-D-ribose 1-diphosphate + ATP. The protein operates within amino-acid biosynthesis; L-histidine biosynthesis; L-histidine from 5-phospho-alpha-D-ribose 1-diphosphate: step 1/9. Functionally, catalyzes the condensation of ATP and 5-phosphoribose 1-diphosphate to form N'-(5'-phosphoribosyl)-ATP (PR-ATP). Has a crucial role in the pathway because the rate of histidine biosynthesis seems to be controlled primarily by regulation of HisG enzymatic activity. This chain is ATP phosphoribosyltransferase, found in Lacticaseibacillus paracasei (strain ATCC 334 / BCRC 17002 / CCUG 31169 / CIP 107868 / KCTC 3260 / NRRL B-441) (Lactobacillus paracasei).